The sequence spans 201 residues: Snake venom metalloproteinase trimerelysin-2 (201 aa).

The residue at position 1 (Gln1) is a Pyrrolidone carboxylic acid. The 196-residue stretch at 6 to 201 (RYIELAIVVD…YNPQCILNAP (196 aa)) folds into the Peptidase M12B domain. The N-linked (GlcNAc...) asparagine glycan is linked to Asn72. Disulfide bonds link Cys117–Cys196, Cys158–Cys180, and Cys160–Cys163. Zn(2+) is bound at residue His142. Glu143 is a catalytic residue. His146 and His152 together coordinate Zn(2+).

Belongs to the venom metalloproteinase (M12B) family. P-I subfamily. Monomer. Zn(2+) is required as a cofactor. Expressed by the venom gland.

It is found in the secreted. It carries out the reaction Cleavage of 3-Asn-|-Gln-4, 10-His-|-Leu-11 and 14-Ala-|-Leu-15 in the insulin B chain, and the bond Z-Gly-Pro-|-Leu-Gly-Pro in a small molecule substrate of microbial collagenase.. In terms of biological role, major venom non-hemorrhagic metalloproteinase. This chain is Snake venom metalloproteinase trimerelysin-2, found in Protobothrops flavoviridis (Habu).